Reading from the N-terminus, the 231-residue chain is 7-cyano-7-deazaguanine synthase (231 aa).

Position 8–18 (8–18) interacts with ATP; that stretch reads FSGGQDSTTCL. Residues Cys188, Cys197, Cys200, and Cys203 each contribute to the Zn(2+) site.

Belongs to the QueC family. Requires Zn(2+) as cofactor.

The catalysed reaction is 7-carboxy-7-deazaguanine + NH4(+) + ATP = 7-cyano-7-deazaguanine + ADP + phosphate + H2O + H(+). The protein operates within purine metabolism; 7-cyano-7-deazaguanine biosynthesis. Its function is as follows. Catalyzes the ATP-dependent conversion of 7-carboxy-7-deazaguanine (CDG) to 7-cyano-7-deazaguanine (preQ(0)). This Salmonella paratyphi B (strain ATCC BAA-1250 / SPB7) protein is 7-cyano-7-deazaguanine synthase.